Reading from the N-terminus, the 322-residue chain is tRNA dimethylallyltransferase (322 aa).

An ATP-binding site is contributed by G18–S25. T20–S25 serves as a coordination point for substrate. Interaction with substrate tRNA regions lie at residues D43–Q46 and Q167–R171.

It belongs to the IPP transferase family. In terms of assembly, monomer. The cofactor is Mg(2+).

It catalyses the reaction adenosine(37) in tRNA + dimethylallyl diphosphate = N(6)-dimethylallyladenosine(37) in tRNA + diphosphate. Its function is as follows. Catalyzes the transfer of a dimethylallyl group onto the adenine at position 37 in tRNAs that read codons beginning with uridine, leading to the formation of N6-(dimethylallyl)adenosine (i(6)A). This Chlorobium phaeobacteroides (strain BS1) protein is tRNA dimethylallyltransferase.